We begin with the raw amino-acid sequence, 329 residues long: 36 kDa antigen (329 aa).

The chain crosses the membrane as a helical span at residues 11 to 31 (AILTGGGALLLGLIVLFYLAY).

This sequence belongs to the membrane fusion protein (MFP) (TC 8.A.1) family.

Its subcellular location is the membrane. This chain is 36 kDa antigen, found in Helicobacter pylori (strain ATCC 700392 / 26695) (Campylobacter pylori).